The following is a 575-amino-acid chain: MAKPFFRLQKFLRRTQFLLFFLTAAYLMTGSLLLLQRVRVALPQGPRAPGPLQTLPVAAVALGVGLLDSRALHDPRVSPELLLGVDMLQSPLTRPRPGPRWLRSRNSELRQLRRRWFHHFMSDSQGPPALGPEAARPAIHSRGTYIGCFSDDGHERTLKGAVFYDLRKMTVSHCQDACAERSYVYAGLEAGAECYCGNRLPAVSVGLEECNHECKGEKGSVCGAVDRLSVYRVDELQPGSRKRRTATYRGCFRLPENITHAFPSSLIQANVTVGTCSGFCSQKEFPLAILRGWECYCAYPTPRFNLRDAMDSSVCGQDPEAQRLAEYCEVYQTPVQDTRCTDRRFLPNKSKVFVALSSFPGAGNTWARHLIEHATGFYTGSYYFDGTLYNKGFKGEKDHWRSRRTICVKTHESGRREIEMFDSAILLIRNPYRSLVAEFNRKCAGHLGYAADRNWKSKEWPDFVNSYASWWSSHVLDWLKYGKRLLVVHYEELRRSLVPTLREMVAFLNVSVSEERLLCVENNKEGSFRRRGRRSHDPEPFTPEMKDLINGYIRTVDQALRDHNWTGLPREYVPR.

Over 1 to 14 (MAKPFFRLQKFLRR) the chain is Cytoplasmic. Residues 15-35 (TQFLLFFLTAAYLMTGSLLLL) form a helical; Signal-anchor for type II membrane protein membrane-spanning segment. At 36–575 (QRVRVALPQG…TGLPREYVPR (540 aa)) the chain is on the extracellular side. WSC domains lie at 142 to 234 (RGTY…YRVD) and 245 to 340 (TATY…DTRC). Residues N257 and N348 are each glycosylated (N-linked (GlcNAc...) asparagine).

The protein belongs to the WSCD family.

Its subcellular location is the golgi apparatus membrane. The catalysed reaction is a ganglioside GM1b + 3'-phosphoadenylyl sulfate = an 8-O-sulfo-ganglioside GM1b + adenosine 3',5'-bisphosphate + H(+). Sialate:O-sulfotransferase which catalyzes 8-O-sulfation at the Sia-glycan level using 3'-phosphoadenosine 5'-phosphosulfate (PAPS) as a donor, forming 8-O-sulfated Sia (Sia8S)-glycans. Displays selectivity toward glycolipids such as GM1 gangliosides. The protein is Sialate:O-sulfotransferase 1 (WSCD1) of Homo sapiens (Human).